Consider the following 450-residue polypeptide: tRNA modification GTPase MnmE (450 aa).

The (6S)-5-formyl-5,6,7,8-tetrahydrofolate site is built by Arg-24, Glu-82, and Lys-121. The TrmE-type G domain maps to 218–375 (GMHVVLVGQP…LRQVLLEAVG (158 aa)). Asn-228 is a binding site for K(+). GTP is bound by residues 228-233 (NVGKSS), 247-253 (TDIAGTT), 272-275 (DTAG), and 356-358 (SAR). Ser-232 provides a ligand contact to Mg(2+). Thr-247, Ile-249, and Thr-252 together coordinate K(+). Position 253 (Thr-253) interacts with Mg(2+). Lys-450 contacts (6S)-5-formyl-5,6,7,8-tetrahydrofolate.

The protein belongs to the TRAFAC class TrmE-Era-EngA-EngB-Septin-like GTPase superfamily. TrmE GTPase family. As to quaternary structure, homodimer. Heterotetramer of two MnmE and two MnmG subunits. The cofactor is K(+).

The protein localises to the cytoplasm. In terms of biological role, exhibits a very high intrinsic GTPase hydrolysis rate. Involved in the addition of a carboxymethylaminomethyl (cmnm) group at the wobble position (U34) of certain tRNAs, forming tRNA-cmnm(5)s(2)U34. This is tRNA modification GTPase MnmE from Laribacter hongkongensis (strain HLHK9).